The chain runs to 106 residues: Small ribosomal subunit protein uS10 (106 aa).

It belongs to the universal ribosomal protein uS10 family. As to quaternary structure, part of the 30S ribosomal subunit.

Functionally, involved in the binding of tRNA to the ribosomes. This is Small ribosomal subunit protein uS10 from Prochlorococcus marinus (strain MIT 9303).